The sequence spans 188 residues: Trafficking protein particle complex subunit 5 (188 aa).

At Ser-10 the chain carries Phosphoserine.

This sequence belongs to the TRAPP small subunits family. BET3 subfamily. Component of the multisubunit TRAPP (transport protein particle) complex, which includes at least TRAPPC2, TRAPPC2L, TRAPPC3, TRAPPC3L, TRAPPC4, TRAPPC5, TRAPPC8, TRAPPC9, TRAPPC10, TRAPPC11 and TRAPPC12.

It localises to the golgi apparatus. It is found in the cis-Golgi network. The protein localises to the endoplasmic reticulum. Its function is as follows. May play a role in vesicular transport from endoplasmic reticulum to Golgi. This chain is Trafficking protein particle complex subunit 5 (Trappc5), found in Mus musculus (Mouse).